Here is a 405-residue protein sequence, read N- to C-terminus: 8-amino-7-oxononanoate synthase 2 (405 aa).

Position 20 (Arg20) interacts with substrate. Gly116 to Tyr117 provides a ligand contact to pyridoxal 5'-phosphate. Position 141 (His141) interacts with substrate. The pyridoxal 5'-phosphate site is built by Ser187, His215, and Thr243. At Lys246 the chain carries N6-(pyridoxal phosphate)lysine. Residue Thr369 participates in substrate binding.

The protein belongs to the class-II pyridoxal-phosphate-dependent aminotransferase family. BioF subfamily. As to quaternary structure, homodimer. Pyridoxal 5'-phosphate serves as cofactor.

The catalysed reaction is 6-carboxyhexanoyl-[ACP] + L-alanine + H(+) = (8S)-8-amino-7-oxononanoate + holo-[ACP] + CO2. The protein operates within cofactor biosynthesis; biotin biosynthesis. Its function is as follows. Catalyzes the decarboxylative condensation of pimeloyl-[acyl-carrier protein] and L-alanine to produce 8-amino-7-oxononanoate (AON), [acyl-carrier protein], and carbon dioxide. This is 8-amino-7-oxononanoate synthase 2 from Polaromonas sp. (strain JS666 / ATCC BAA-500).